The following is a 179-amino-acid chain: Large ribosomal subunit protein uL5 (179 aa).

This sequence belongs to the universal ribosomal protein uL5 family. In terms of assembly, part of the 50S ribosomal subunit; part of the 5S rRNA/L5/L18/L25 subcomplex. Contacts the 5S rRNA and the P site tRNA. Forms a bridge to the 30S subunit in the 70S ribosome.

This is one of the proteins that bind and probably mediate the attachment of the 5S RNA into the large ribosomal subunit, where it forms part of the central protuberance. In the 70S ribosome it contacts protein S13 of the 30S subunit (bridge B1b), connecting the 2 subunits; this bridge is implicated in subunit movement. Contacts the P site tRNA; the 5S rRNA and some of its associated proteins might help stabilize positioning of ribosome-bound tRNAs. This is Large ribosomal subunit protein uL5 from Prochlorococcus marinus (strain NATL1A).